The following is a 147-amino-acid chain: Hemoglobin subunit beta-2 (147 aa).

One can recognise a Globin domain in the interval 3–147 (EWTDEERTII…VVSALGRQYH (145 aa)). Heme b-binding residues include H64 and H93.

It belongs to the globin family. Hb 2 is a heterotetramer of two alpha-2 and two beta-2 chains. Hb 3 is a heterotetramer of two alpha-1 and two beta-2 chains. As to expression, red blood cells.

Involved in oxygen transport from gills to the various peripheral tissues. The sequence is that of Hemoglobin subunit beta-2 (hbb2) from Gadus morhua (Atlantic cod).